We begin with the raw amino-acid sequence, 458 residues long: 5-hydroxytryptamine receptor 2C (458 aa).

The N-terminal stretch at methionine 1 to alanine 32 is a signal peptide. Residues isoleucine 33 to tryptophan 55 lie on the Extracellular side of the membrane. Asparagine 39 carries an N-linked (GlcNAc...) asparagine glycan. The chain crosses the membrane as a helical span at residues proline 56 to methionine 80. The Cytoplasmic portion of the chain corresponds to glutamate 81–asparagine 86. Residues alanine 87–leucine 111 form a helical membrane-spanning segment. Topologically, residues leucine 112–proline 128 are extracellular. An intrachain disulfide couples cysteine 127 to cysteine 207. Residues valine 129–aspartate 151 traverse the membrane as a helical segment. Threonine 139 is a binding site for ergotamine. Positions aspartate 151–tyrosine 153 match the DRY motif; important for ligand-induced conformation changes motif. The Cytoplasmic portion of the chain corresponds to arginine 152 to serine 167. The chain crosses the membrane as a helical span at residues arginine 168–isoleucine 189. Residues proline 190–asparagine 213 are Extracellular-facing. Asparagine 204 carries an N-linked (GlcNAc...) asparagine glycan. An ergotamine-binding site is contributed by leucine 209. A helical transmembrane segment spans residues phenylalanine 214 to leucine 236. The Cytoplasmic segment spans residues threonine 237–lysine 311. Residues glutamate 274–glutamine 301 are disordered. Residues arginine 287–arginine 297 show a composition bias toward basic residues. The chain crosses the membrane as a helical span at residues valine 312–leucine 336. An intrachain disulfide couples cysteine 337 to cysteine 341. Residues cysteine 337–glutamate 347 are Extracellular-facing. The helical transmembrane segment at lysine 348–leucine 370 threads the bilayer. An NPxxY motif; important for ligand-induced conformation changes and signaling motif is present at residues asparagine 364–tyrosine 368. Residues phenylalanine 371 to valine 458 lie on the Cytoplasmic side of the membrane. Residues serine 456 to valine 458 carry the PDZ-binding motif.

Belongs to the G-protein coupled receptor 1 family. As to quaternary structure, interacts with MPDZ. Interacts with ARRB2. Interacts with MPP3; this interaction stabilizes the receptor at the plasma membrane and prevents the desensitization of the HTR2C receptor-mediated calcium response. N-glycosylated. In terms of tissue distribution, detected in brain.

Its subcellular location is the cell membrane. Inhibited by inverse agonist ritanserin. Functionally, G-protein coupled receptor for 5-hydroxytryptamine (serotonin). Also functions as a receptor for various drugs and psychoactive substances, including ergot alkaloid derivatives, 1-2,5,-dimethoxy-4-iodophenyl-2-aminopropane (DOI) and lysergic acid diethylamide (LSD). Ligand binding causes a conformation change that triggers signaling via guanine nucleotide-binding proteins (G proteins) and modulates the activity of downstream effectors. HTR2C is coupled to G(q)/G(11) G alpha proteins and activates phospholipase C-beta, releasing diacylglycerol (DAG) and inositol 1,4,5-trisphosphate (IP3) second messengers that modulate the activity of phosphatidylinositol 3-kinase and promote the release of Ca(2+) ions from intracellular stores, respectively. Beta-arrestin family members inhibit signaling via G proteins and mediate activation of alternative signaling pathways. Regulates neuronal activity via the activation of short transient receptor potential calcium channels in the brain, and thereby modulates the activation of pro-opiomelanocortin neurons and the release of CRH that then regulates the release of corticosterone. Plays a role in the regulation of appetite and eating behavior, responses to anxiogenic stimuli and stress. Plays a role in insulin sensitivity and glucose homeostasis. This Homo sapiens (Human) protein is 5-hydroxytryptamine receptor 2C.